The sequence spans 267 residues: Tryptophan synthase alpha chain (267 aa).

Catalysis depends on proton acceptor residues glutamate 49 and aspartate 60.

This sequence belongs to the TrpA family. As to quaternary structure, tetramer of two alpha and two beta chains.

The catalysed reaction is (1S,2R)-1-C-(indol-3-yl)glycerol 3-phosphate + L-serine = D-glyceraldehyde 3-phosphate + L-tryptophan + H2O. It participates in amino-acid biosynthesis; L-tryptophan biosynthesis; L-tryptophan from chorismate: step 5/5. The alpha subunit is responsible for the aldol cleavage of indoleglycerol phosphate to indole and glyceraldehyde 3-phosphate. The protein is Tryptophan synthase alpha chain of Rippkaea orientalis (strain PCC 8801 / RF-1) (Cyanothece sp. (strain PCC 8801)).